A 232-amino-acid polypeptide reads, in one-letter code: Pyridoxal 5'-phosphate synthase subunit PdxS (232 aa).

Lysine 23 serves as the catalytic Schiff-base intermediate with D-ribose 5-phosphate. D-ribose 5-phosphate is bound at residue glycine 95. Arginine 107 contacts D-glyceraldehyde 3-phosphate. D-ribose 5-phosphate contacts are provided by residues glycine 156 and 177-178 (GS).

Belongs to the PdxS/SNZ family. In terms of assembly, in the presence of PdxT, forms a dodecamer of heterodimers.

The enzyme catalyses aldehydo-D-ribose 5-phosphate + D-glyceraldehyde 3-phosphate + L-glutamine = pyridoxal 5'-phosphate + L-glutamate + phosphate + 3 H2O + H(+). It functions in the pathway cofactor biosynthesis; pyridoxal 5'-phosphate biosynthesis. Catalyzes the formation of pyridoxal 5'-phosphate from ribose 5-phosphate (RBP), glyceraldehyde 3-phosphate (G3P) and ammonia. The ammonia is provided by the PdxT subunit. Can also use ribulose 5-phosphate and dihydroxyacetone phosphate as substrates, resulting from enzyme-catalyzed isomerization of RBP and G3P, respectively. This is Pyridoxal 5'-phosphate synthase subunit PdxS from Clostridium novyi.